The primary structure comprises 201 residues: Charged multivesicular body protein 6 (201 aa).

Glycine 2 is lipidated: N-myristoyl glycine. A coiled-coil region spans residues 10–145; sequence QSRVTEQDKA…YQRQIDELLA (136 aa). A Phosphoserine modification is found at serine 119. The residue at position 130 (threonine 130) is a Phosphothreonine. The short motif at 168 to 179 is the Type-2 MIT-interacting motif element; the sequence is IELPEVPSEPLP. The interval 170 to 181 is interaction with VPS4A; that stretch reads LPEVPSEPLPEK.

This sequence belongs to the SNF7 family. As to quaternary structure, probable core component of the endosomal sorting required for transport complex III (ESCRT-III). ESCRT-III components are thought to multimerize to form a flat lattice on the perimeter membrane of the endosome. Several assembly forms of ESCRT-III may exist that interact and act sequentially. Interacts with VPS4A; the interaction is direct. Interacts with VPS4B; the interaction is direct. Interacts with CHMP4A, CHMP4B and CHMP4C. Interacts with SNF8, VPS25 and VPS36. Post-translationally, ISGylated in a CHMP5-dependent manner. Isgylation weakens its interaction with VPS4A. Ubiquitously expressed.

Its subcellular location is the endomembrane system. It localises to the endosome membrane. It is found in the late endosome membrane. The protein localises to the membrane. Probable core component of the endosomal sorting required for transport complex III (ESCRT-III) which is involved in multivesicular bodies (MVBs) formation and sorting of endosomal cargo proteins into MVBs. MVBs contain intraluminal vesicles (ILVs) that are generated by invagination and scission from the limiting membrane of the endosome and mostly are delivered to lysosomes enabling degradation of membrane proteins, such as stimulated growth factor receptors, lysosomal enzymes and lipids. The MVB pathway appears to require the sequential function of ESCRT-O, -I,-II and -III complexes. ESCRT-III proteins mostly dissociate from the invaginating membrane before the ILV is released. The ESCRT machinery also functions in topologically equivalent membrane fission events, such as the terminal stages of cytokinesis and the budding of enveloped viruses (HIV-1 and other lentiviruses). ESCRT-III proteins are believed to mediate the necessary vesicle extrusion and/or membrane fission activities, possibly in conjunction with the AAA ATPase VPS4. In the ESCRT-III complex, it probably serves as an acceptor for the ESCRT-II complex on endosomal membranes. The polypeptide is Charged multivesicular body protein 6 (CHMP6) (Homo sapiens (Human)).